A 392-amino-acid chain; its full sequence is Glycerophosphodiester phosphodiesterase GDPD5 (392 aa).

Residues Met1–Gly21 form the signal peptide. The GP-PDE domain maps to Pro44–Gln362. Asn120, Asn239, Asn260, and Asn329 each carry an N-linked (GlcNAc...) asparagine glycan.

Belongs to the glycerophosphoryl diester phosphodiesterase family. In terms of tissue distribution, expressed in roots, rosette and cauline leaves, stems, flowers and siliques.

It is found in the secreted. Its subcellular location is the cell wall. The protein resides in the vacuole. The catalysed reaction is a sn-glycero-3-phosphodiester + H2O = an alcohol + sn-glycerol 3-phosphate + H(+). This chain is Glycerophosphodiester phosphodiesterase GDPD5, found in Arabidopsis thaliana (Mouse-ear cress).